Consider the following 138-residue polypeptide: Sec-independent protein translocase protein TatB (138 aa).

A helical transmembrane segment spans residues 2-18; the sequence is SFGEIIVILVVAILVLG. The segment at 109–138 is disordered; it reads NNLSGQNLNTEEKPNLSKLETQDKNGKINV. Basic and acidic residues predominate over residues 118-138; the sequence is TEEKPNLSKLETQDKNGKINV.

It belongs to the TatB family. In terms of assembly, the Tat system comprises two distinct complexes: a TatABC complex, containing multiple copies of TatA, TatB and TatC subunits, and a separate TatA complex, containing only TatA subunits. Substrates initially bind to the TatABC complex, which probably triggers association of the separate TatA complex to form the active translocon.

Its subcellular location is the cell inner membrane. In terms of biological role, part of the twin-arginine translocation (Tat) system that transports large folded proteins containing a characteristic twin-arginine motif in their signal peptide across membranes. Together with TatC, TatB is part of a receptor directly interacting with Tat signal peptides. TatB may form an oligomeric binding site that transiently accommodates folded Tat precursor proteins before their translocation. This Campylobacter jejuni subsp. jejuni serotype O:2 (strain ATCC 700819 / NCTC 11168) protein is Sec-independent protein translocase protein TatB.